A 740-amino-acid polypeptide reads, in one-letter code: E3 ubiquitin-protein ligase WAV3 (740 aa).

Positions 14–105 (PRNSDAAAPD…AISNPSSPRS (92 aa)) are disordered. Low complexity predominate over residues 49 to 67 (SGGSNPSTPRSTSSPSLRC). The segment covering 71-90 (DAQTPTAEQTSTPRSATKSP) has biased composition (polar residues). An RING-type; atypical zinc finger spans residues 122–167 (CGICLNSVKTGQGTAKYTAECSHAFHFPCIADYVRKQGKLVCPVCN). The 145-residue stretch at 332-476 (DLVVVVDVGG…IPVTEHGFGE (145 aa)) folds into the VWFA domain. The tract at residues 677-709 (QSQHQQQHNQRRRGSERETTTTMTLMDENGEPL) is disordered.

In terms of assembly, interacts with SINAT1, SINAT2, SINAT3, SINAT4, SINAT5, TOR1/SPR2 and FIP2. Expressed in root tips and leaf primordia.

The catalysed reaction is S-ubiquitinyl-[E2 ubiquitin-conjugating enzyme]-L-cysteine + [acceptor protein]-L-lysine = [E2 ubiquitin-conjugating enzyme]-L-cysteine + N(6)-ubiquitinyl-[acceptor protein]-L-lysine.. E3 ubiquitin-protein ligase involved in the regulation of root growth. Acts as a positive regulator of root gravitropism. Possesses E3 protein ligase activity in vitro. This chain is E3 ubiquitin-protein ligase WAV3, found in Arabidopsis thaliana (Mouse-ear cress).